A 459-amino-acid polypeptide reads, in one-letter code: Elongation factor 1-alpha 2 (459 aa).

Residues 5 to 242 enclose the tr-type G domain; it reads KTHINIVVIG…DCIIPPQRPT (238 aa). Residues 14–21 form a G1 region; that stretch reads GHVDSGKS. The interval 70 to 74 is G2; the sequence is GITID. The tract at residues 91–94 is G3; sequence DAPG. A G4 region spans residues 153-156; it reads NKMD. Residues 194 to 196 form a G5 region; that stretch reads SGF. Glu301 and Glu374 each carry 5-glutamyl glycerylphosphorylethanolamine.

Belongs to the TRAFAC class translation factor GTPase superfamily. Classic translation factor GTPase family. EF-Tu/EF-1A subfamily.

The protein localises to the cytoplasm. This protein promotes the GTP-dependent binding of aminoacyl-tRNA to the A-site of ribosomes during protein biosynthesis. The sequence is that of Elongation factor 1-alpha 2 (eft-2) from Oscheius tipulae.